An 83-amino-acid chain; its full sequence is Polcalcin Bra r 2 (83 aa).

2 EF-hand domains span residues threonine 5 to valine 40 and aspartate 43 to leucine 75. 10 residues coordinate Ca(2+): aspartate 18, asparagine 20, aspartate 22, lysine 24, glutamate 29, aspartate 53, aspartate 55, aspartate 57, tyrosine 59, and glutamate 64.

This is Polcalcin Bra r 2 from Brassica campestris (Field mustard).